We begin with the raw amino-acid sequence, 334 residues long: Serine/threonine-protein kinase (334 aa).

The Protein kinase domain maps to 53–333; that stretch reads FEVLQPLQSG…DEILNFGMWT (281 aa). ATP-binding positions include 59–67 and Lys82; that span reads LQSGSEGRV. The Proton acceptor role is filled by Asp167.

Belongs to the protein kinase superfamily. Ser/Thr protein kinase family.

It catalyses the reaction L-seryl-[protein] + ATP = O-phospho-L-seryl-[protein] + ADP + H(+). The catalysed reaction is L-threonyl-[protein] + ATP = O-phospho-L-threonyl-[protein] + ADP + H(+). In terms of biological role, able to phosphorylate in vitro the major virion phosphoprotein phosphorylated in vivo. The polypeptide is Serine/threonine-protein kinase (PK) (Sus scrofa (Pig)).